We begin with the raw amino-acid sequence, 605 residues long: Putative glutaminase 2 (605 aa).

Positions 213, 262, 308, 315, 342, 394, and 412 each coordinate substrate. ANK repeat units lie at residues aspartate 480–threonine 509 and aspartate 513–lysine 543. Basic and acidic residues predominate over residues lysine 569–serine 581. Residues lysine 569–aspartate 605 are disordered. Acidic residues predominate over residues aspartate 586 to glycine 595.

The protein belongs to the glutaminase family.

It catalyses the reaction L-glutamine + H2O = L-glutamate + NH4(+). The sequence is that of Putative glutaminase 2 (glna-2) from Caenorhabditis elegans.